A 37-amino-acid chain; its full sequence is Potassium channel toxin alpha-KTx 15.1 (37 aa).

Position 1 is a pyrrolidone carboxylic acid (Q1). 3 disulfides stabilise this stretch: C8/C28, C13/C33, and C17/C35.

It belongs to the short scorpion toxin superfamily. Potassium channel inhibitor family. Alpha-KTx 15 subfamily. As to expression, expressed by the venom gland.

Its subcellular location is the secreted. Functionally, blocker of voltage-gated potassium channels (600 nM of the toxin induces a block of 25% of hERG currents). May also inhibit Kv4/KCND when coexpressed with DPP6 or DPP10. In adult rat brain, it blocks the transient potassium channels in cerebellum granular cells. Blocks potassium channels by a simple 'plugging mechanism', in which a single toxin molecule finds a specific receptor site in the external vestibule of the potassium channel and thereby occludes the outer entry to the potassium conducting pore. This Androctonus australis (Sahara scorpion) protein is Potassium channel toxin alpha-KTx 15.1.